The following is a 950-amino-acid chain: General transcription factor II-I repeat domain-containing protein 2 (950 aa).

GTF2I-like repeat units follow at residues 100–194 (QVDS…QPGG) and 324–418 (LSSL…SNVG).

This sequence belongs to the TFII-I family.

It localises to the nucleus. The chain is General transcription factor II-I repeat domain-containing protein 2 (GTF2IRD2) from Bos taurus (Bovine).